The sequence spans 530 residues: Transcriptional regulator VasH (530 aa).

Residues 193-422 enclose the Sigma-54 factor interaction domain; it reads LIGESAAMQK…LKHLIEFGCA (230 aa). ATP-binding positions include 221–228 and 284–293; these read GETGTGKE and ANGGTLFLDE.

In terms of biological role, transcriptional regulator of the type VI secretion system. This is Transcriptional regulator VasH from Vibrio cholerae serotype O1 (strain ATCC 39315 / El Tor Inaba N16961).